A 150-amino-acid chain; its full sequence is Large ribosomal subunit protein bL9 (150 aa).

Belongs to the bacterial ribosomal protein bL9 family.

Functionally, binds to the 23S rRNA. The protein is Large ribosomal subunit protein bL9 of Yersinia pseudotuberculosis serotype I (strain IP32953).